The sequence spans 935 residues: Intimin (935 aa).

Residues 1-41 form the signal peptide; it reads MITHGFYARTRHKHKLKKTFIMLSAGLGLFFYVNQNSFANG. The interval 40 to 153 is peptidoglycan-binding; it reads NGENYFKLSS…KMTKMSPDAT (114 aa). The interval 40-153 is sufficient for homodimerization; sequence NGENYFKLSS…KMTKMSPDAT (114 aa). The segment at 40–212 is required for periplasmic localization; sequence NGENYFKLSS…LQAWLQHYGT (173 aa). Residues 63 to 112 form the LysM domain; the sequence is LFYTLKTGETVSSISKSQGISLSVIWSLNKHLYSSESEMLKAAPGQQIIL. Residues 210-411 are inverse autotransporter; that stretch reads YGTAEVNLQS…LYSMQFRYQF (202 aa). Residues 402 to 411 form a signature sequence for beta-barrel assembly machinery (BAM), which recognizes the unfolded beta-barrel in the periplasm region; it reads LYSMQFRYQF. Big-1 domains follow at residues 560 to 653 and 660 to 754; these read VTDF…VIFV and ITEI…VTFF. Residues 790–834 enclose the BIG2 domain; that stretch reads GGNGTYSWHSENTNIATVDESGKVTLKGKGTAVINVTSGDKQTVS. Cysteines 859 and 933 form a disulfide.

The protein belongs to the intimin/invasin family. As to quaternary structure, homodimer. Interacts with Tir.

The protein resides in the cell outer membrane. Its function is as follows. An inverse autotransporter. Adhesin, which mediates attachment to the human intestine epithelial cells. Necessary for the production of attaching and effacing lesions on infected human tissue culture cells. Anchored to the outer membrane by binding to peptidoglycan (PGN) via its periplasmic domain, thus helping in receptor interactions during host invasion. PGN-binding may also aid in resisting mechanical and chemical stress during transit of the bacterium through the gastrointestinal tract of the host. This is Intimin (eae) from Escherichia coli O111:H-.